The primary structure comprises 569 residues: 3-(3-hydroxy-phenyl)propionate/3-hydroxycinnamic acid hydroxylase (569 aa).

FAD contacts are provided by residues 8–37 (DVVIVGAGPAGLTLANILGLEGVRVLVVDE) and 273–283 (FREGRLMLAGD).

It belongs to the PheA/TfdB FAD monooxygenase family. FAD is required as a cofactor.

The enzyme catalyses 3-(3-hydroxyphenyl)propanoate + NADH + O2 + H(+) = 3-(2,3-dihydroxyphenyl)propanoate + NAD(+) + H2O. It carries out the reaction (2E)-3-(3-hydroxyphenyl)prop-2-enoate + NADH + O2 + H(+) = (2E)-3-(2,3-dihydroxyphenyl)prop-2-enoate + NAD(+) + H2O. Its pathway is aromatic compound metabolism; 3-phenylpropanoate degradation. Its function is as follows. Catalyzes the insertion of one atom of molecular oxygen into position 2 of the phenyl ring of 3-(3-hydroxyphenyl)propionate (3-HPP) and hydroxycinnamic acid (3HCI). The polypeptide is 3-(3-hydroxy-phenyl)propionate/3-hydroxycinnamic acid hydroxylase (Mycolicibacterium gilvum (strain PYR-GCK) (Mycobacterium gilvum (strain PYR-GCK))).